Reading from the N-terminus, the 595-residue chain is Elongation factor 4 (595 aa).

A tr-type G domain is found at 2-184 (ETIRNFSIIA…TITHNIPYPK (183 aa)). Residues 14 to 19 (DHGKST) and 131 to 134 (NKID) contribute to the GTP site.

It belongs to the TRAFAC class translation factor GTPase superfamily. Classic translation factor GTPase family. LepA subfamily.

The protein localises to the cell membrane. It carries out the reaction GTP + H2O = GDP + phosphate + H(+). Its function is as follows. Required for accurate and efficient protein synthesis under certain stress conditions. May act as a fidelity factor of the translation reaction, by catalyzing a one-codon backward translocation of tRNAs on improperly translocated ribosomes. Back-translocation proceeds from a post-translocation (POST) complex to a pre-translocation (PRE) complex, thus giving elongation factor G a second chance to translocate the tRNAs correctly. Binds to ribosomes in a GTP-dependent manner. This is Elongation factor 4 from Buchnera aphidicola subsp. Baizongia pistaciae (strain Bp).